The chain runs to 60 residues: Cytotoxin 2 (60 aa).

Intrachain disulfides connect Cys-3-Cys-21, Cys-14-Cys-38, Cys-42-Cys-53, and Cys-54-Cys-59.

The protein belongs to the three-finger toxin family. Short-chain subfamily. Type IA cytotoxin sub-subfamily. Monomer in solution; Homodimer and oligomer in the presence of negatively charged lipids forming a pore with a size ranging between 20 and 30 Angstroms. In terms of tissue distribution, expressed by the venom gland.

It is found in the secreted. It localises to the target cell membrane. Functionally, shows cytolytic activity on many different cells by forming pore in lipid membranes. In vivo, increases heart rate or kills the animal by cardiac arrest. In addition, it binds to heparin with high affinity, interacts with Kv channel-interacting protein 1 (KCNIP1) in a calcium-independent manner, and binds to integrin alpha-V/beta-3 (ITGAV/ITGB3) with moderate affinity. In Naja nivea (Cape cobra), this protein is Cytotoxin 2.